The sequence spans 41 residues: Photosystem I reaction center subunit IX (41 aa).

Residues 7 to 27 (YLSTAPVIALAWMSFTAGLLI) traverse the membrane as a helical segment.

Belongs to the PsaJ family.

It is found in the plastid. It localises to the chloroplast thylakoid membrane. Functionally, may help in the organization of the PsaE and PsaF subunits. The chain is Photosystem I reaction center subunit IX from Tupiella akineta (Green alga).